A 317-amino-acid chain; its full sequence is Beta-ketoacyl-[acyl-carrier-protein] synthase III (317 aa).

Catalysis depends on residues C112 and H244. Residues 245 to 249 (QANLR) are ACP-binding. The active site involves N274.

This sequence belongs to the thiolase-like superfamily. FabH family. Homodimer.

The protein resides in the cytoplasm. It carries out the reaction malonyl-[ACP] + acetyl-CoA + H(+) = 3-oxobutanoyl-[ACP] + CO2 + CoA. It participates in lipid metabolism; fatty acid biosynthesis. Catalyzes the condensation reaction of fatty acid synthesis by the addition to an acyl acceptor of two carbons from malonyl-ACP. Catalyzes the first condensation reaction which initiates fatty acid synthesis and may therefore play a role in governing the total rate of fatty acid production. Possesses both acetoacetyl-ACP synthase and acetyl transacylase activities. Its substrate specificity determines the biosynthesis of branched-chain and/or straight-chain of fatty acids. In Salmonella typhi, this protein is Beta-ketoacyl-[acyl-carrier-protein] synthase III.